Reading from the N-terminus, the 194-residue chain is ATP-dependent Clp protease proteolytic subunit (194 aa).

Ser-98 (nucleophile) is an active-site residue. His-123 is a catalytic residue.

It belongs to the peptidase S14 family. As to quaternary structure, fourteen ClpP subunits assemble into 2 heptameric rings which stack back to back to give a disk-like structure with a central cavity, resembling the structure of eukaryotic proteasomes.

The protein localises to the cytoplasm. It catalyses the reaction Hydrolysis of proteins to small peptides in the presence of ATP and magnesium. alpha-casein is the usual test substrate. In the absence of ATP, only oligopeptides shorter than five residues are hydrolyzed (such as succinyl-Leu-Tyr-|-NHMec, and Leu-Tyr-Leu-|-Tyr-Trp, in which cleavage of the -Tyr-|-Leu- and -Tyr-|-Trp bonds also occurs).. Functionally, cleaves peptides in various proteins in a process that requires ATP hydrolysis. Has a chymotrypsin-like activity. Plays a major role in the degradation of misfolded proteins. The protein is ATP-dependent Clp protease proteolytic subunit of Clostridium kluyveri (strain NBRC 12016).